A 299-amino-acid polypeptide reads, in one-letter code: 4-diphosphocytidyl-2-C-methyl-D-erythritol kinase (299 aa).

K11 is an active-site residue. 94–104 (PQGGGLGGGSS) is an ATP binding site. D136 is an active-site residue.

It belongs to the GHMP kinase family. IspE subfamily.

It catalyses the reaction 4-CDP-2-C-methyl-D-erythritol + ATP = 4-CDP-2-C-methyl-D-erythritol 2-phosphate + ADP + H(+). Its pathway is isoprenoid biosynthesis; isopentenyl diphosphate biosynthesis via DXP pathway; isopentenyl diphosphate from 1-deoxy-D-xylulose 5-phosphate: step 3/6. Catalyzes the phosphorylation of the position 2 hydroxy group of 4-diphosphocytidyl-2C-methyl-D-erythritol. This is 4-diphosphocytidyl-2-C-methyl-D-erythritol kinase from Bordetella parapertussis (strain 12822 / ATCC BAA-587 / NCTC 13253).